The following is a 573-amino-acid chain: Acetolactate synthase large subunit (573 aa).

E51 lines the thiamine diphosphate pocket. Residues R153, 261-282 (HGTLEANTAMHESDLILGIGVR), and 304-323 (DIDPTSISKNVPVAIPIVGN) each bind FAD. Positions 396-476 (QHQMFAALHY…VVIICLNNHF (81 aa)) are thiamine pyrophosphate binding. Residues D447 and N474 each contribute to the Mg(2+) site.

The protein belongs to the TPP enzyme family. Dimer of large and small chains. Mg(2+) is required as a cofactor. The cofactor is thiamine diphosphate.

It catalyses the reaction 2 pyruvate + H(+) = (2S)-2-acetolactate + CO2. It participates in amino-acid biosynthesis; L-isoleucine biosynthesis; L-isoleucine from 2-oxobutanoate: step 1/4. The protein operates within amino-acid biosynthesis; L-valine biosynthesis; L-valine from pyruvate: step 1/4. This Haemophilus influenzae (strain ATCC 51907 / DSM 11121 / KW20 / Rd) protein is Acetolactate synthase large subunit (ilvI).